The primary structure comprises 277 residues: MRGASHLQILLLLVLGTRMQECAACGQPRMSSRIVGGRDAQDGEWPWQTSIQHRGAHVCGGSLIAPQWVLTAGHCFPRRVWPSEYSVLLGALSLDVRSSHELLVPVLRVLLPPDYSEDEARGDLALLQLRHPVSLSTRIQPVCLPAPGSHPPPGSPCWVTGWGSLSPGVPLPKGRPLQGVRVPLLDSRACDRLYHVGANVPQGERIVLPGNLCAGYRRGHKDACQGDSGGPLTCMESGHWVLVGVVSWGKGCALPNRPGVYTNVAKYSPWIQARLSL.

The signal sequence occupies residues 1–24; that stretch reads MRGASHLQILLLLVLGTRMQECAA. The region spanning 34 to 276 is the Peptidase S1 domain; it reads IVGGRDAQDG…YSPWIQARLS (243 aa). A disulfide bridge connects residues Cys-59 and Cys-75. Catalysis depends on charge relay system residues His-74 and Asp-123. Cystine bridges form between Cys-157/Cys-234, Cys-190/Cys-213, and Cys-224/Cys-252. Residue Ser-228 is the Charge relay system of the active site.

This sequence belongs to the peptidase S1 family. In terms of processing, not glycosylated. As to expression, widely expressed.

The protein localises to the secreted. Its function is as follows. Serine protease that has amidolytic activity, cleaving its substrates before Arg residues. This chain is Serine protease 33 (Prss33), found in Mus musculus (Mouse).